We begin with the raw amino-acid sequence, 806 residues long: MEYGKVIFLFLLFLKSGQGESLENYIKTEGASLSNSQKKQFVASSTEECEALCEKETEFVCRSFEHYNKEQKCVIMSENSKTSSVERKRDVVLFEKRIYLSDCKSGNGRNYRGTLSKTKSGITCQKWSDLSPHVPNYAPSKYPDAGLEKNYCRNPDDDVKGPWCYTTNPDIRYEYCDVPECEDECMHCSGENYRGTISKTESGIECQPWDSQEPHSHEYIPSKFPSKDLKENYCRNPDGEPRPWCFTSNPEKRWEFCNIPRCSSPPPPPGPMLQCLKGRGENYRGKIAVTKSGHTCQRWNKQTPHKHNRTPENFPCRGLDENYCRNPDGELEPWCYTTNPDVRQEYCAIPSCGTSSPHTDRVEQSPVIQECYEGKGENYRGTTSTTISGKKCQAWSSMTPHQHKKTPDNFPNADLIRNYCRNPDGDKSPWCYTMDPTVRWEFCNLEKCSGTGSTVLNAQTTRVPSVDTTSHPESDCMYGSGKDYRGKRSTTVTGTLCQAWTAQEPHRHTIFTPDTYPRAGLEENYCRNPDGDPNGPWCYTTNPKKLFDYCDIPQCVSPSSFDCGKPRVEPQKCPGRIVGGCYAQPHSWPWQISLRTRFGEHFCGGTLIAPQWVLTAAHCLERSQWPGAYKVILGLHREVNPESYSQEIGVSRLFKGPLAADIALLKLNRPAAINDKVIPACLPSQDFMVPDRTLCHVTGWGDTQGTSPRGLLKQASLPVIDNRVCNRHEYLNGRVKSTELCAGHLVGRGDSCQGDSGGPLICFEDDKYVLQGVTSWGLGCARPNKPGVYVRVSRYISWIEDVMKNN.

A signal peptide spans 1–19; sequence MEYGKVIFLFLLFLKSGQG. The region spanning 20 to 98 is the PAN domain; it reads ESLENYIKTE…RDVVLFEKRI (79 aa). 21 disulfide bridges follow: C49–C73, C53–C61, C103–C181, C124–C164, C152–C176, C185–C262, C188–C316, C206–C245, C234–C257, C275–C352, C296–C335, C324–C347, C371–C448, C392–C431, C420–C443, C476–C555, C497–C538, C526–C550, C563–C681, C573–C581, and C603–C619. 5 Kringle domains span residues 102–181, 184–262, 274–352, 370–448, and 475–555; these read DCKS…VPEC, ECMH…IPRC, QCLK…IPSC, ECYE…LEKC, and DCMY…IPQC. In terms of domain architecture, Peptidase S1 spans 577–804; it reads IVGGCYAQPH…YISWIEDVMK (228 aa). S593 bears the Phosphoserine mark. Residues H618 and D661 each act as charge relay system in the active site. Phosphoserine is present on S684. Intrachain disulfides connect C695–C762, C725–C741, and C752–C780. Residue S756 is the Charge relay system of the active site.

Belongs to the peptidase S1 family. Plasminogen subfamily. Interacts with CSPG4 and AMOT. Interacts (via the Kringle domains) with HRG; the interaction tethers PLG to the cell surface and enhances its activation. Interacts (via Kringle 4 domain) with ADA; the interaction stimulates PLG activation when in complex with DPP4. Angiostatin: Interacts with ATP5F1A; the interaction inhibits most of the angiogenic effects of angiostatin. Post-translationally, in the presence of the inhibitor, the activation involves only cleavage after Arg-576, yielding two chains held together by two disulfide bonds. In the absence of the inhibitor, the activation involves additionally the removal of the activation peptide.

It is found in the secreted. The enzyme catalyses Preferential cleavage: Lys-|-Xaa &gt; Arg-|-Xaa, higher selectivity than trypsin. Converts fibrin into soluble products.. Its activity is regulated as follows. Converted into plasmin by plasminogen activators, both plasminogen and its activator being bound to fibrin. Activated with catalytic amounts of streptokinase. In terms of biological role, plasmin dissolves the fibrin of blood clots and acts as a proteolytic factor in a variety of other processes including embryonic development, tissue remodeling, tumor invasion, and inflammation. In ovulation, weakens the walls of the Graafian follicle. It activates the urokinase-type plasminogen activator, collagenases and several complement zymogens, such as C1, C4 and C5. Cleavage of fibronectin and laminin leads to cell detachment and apoptosis. Also cleaves fibrin, thrombospondin and von Willebrand factor. Its role in tissue remodeling and tumor invasion may be modulated by CSPG4. Binds to cells. This Notamacropus eugenii (Tammar wallaby) protein is Plasminogen (PLG).